The following is a 115-amino-acid chain: NADH-ubiquinone oxidoreductase chain 3 (115 aa).

3 helical membrane-spanning segments follow: residues Phe3 to Trp23, Phe55 to Leu75, and Leu84 to Tyr104.

This sequence belongs to the complex I subunit 3 family. In terms of assembly, core subunit of respiratory chain NADH dehydrogenase (Complex I) which is composed of 45 different subunits. Interacts with TMEM186. Interacts with TMEM242.

Its subcellular location is the mitochondrion inner membrane. The catalysed reaction is a ubiquinone + NADH + 5 H(+)(in) = a ubiquinol + NAD(+) + 4 H(+)(out). Its function is as follows. Core subunit of the mitochondrial membrane respiratory chain NADH dehydrogenase (Complex I) which catalyzes electron transfer from NADH through the respiratory chain, using ubiquinone as an electron acceptor. Essential for the catalytic activity of complex I. The sequence is that of NADH-ubiquinone oxidoreductase chain 3 from Pan troglodytes (Chimpanzee).